A 122-amino-acid chain; its full sequence is Acidic phospholipase A2 BlatPLA2 (122 aa).

Intrachain disulfides connect Cys26-Cys115, Cys28-Cys44, Cys43-Cys95, Cys49-Cys122, Cys50-Cys88, Cys57-Cys81, and Cys75-Cys86. The Ca(2+) site is built by Tyr27, Gly29, and Gly31. His47 is an active-site residue. Asp48 contributes to the Ca(2+) binding site. Residue Asp89 is part of the active site.

This sequence belongs to the phospholipase A2 family. Group II subfamily. D49 sub-subfamily. Monomer. Ca(2+) serves as cofactor. In terms of tissue distribution, expressed by the venom gland.

It localises to the secreted. The enzyme catalyses a 1,2-diacyl-sn-glycero-3-phosphocholine + H2O = a 1-acyl-sn-glycero-3-phosphocholine + a fatty acid + H(+). Functionally, acidic phospholipase A2 (PLA2) that only causes a mild edema, when subcutaneously injected in the mice foot. PLA2 catalyzes the calcium-dependent hydrolysis of the 2-acyl groups in 3-sn-phosphoglycerides. The sequence is that of Acidic phospholipase A2 BlatPLA2 from Bothriechis lateralis (Side-striped palm pitviper).